The following is a 249-amino-acid chain: Geranylgeranylglyceryl phosphate synthase (249 aa).

Residues D20 and S49 each contribute to the Mg(2+) site. Sn-glycerol 1-phosphate-binding positions include 169-175 (YLDAGSG), 200-201 (GG), and 222-223 (GN).

The protein belongs to the GGGP/HepGP synthase family. Group II subfamily. In terms of assembly, homohexamer. The cofactor is Mg(2+).

The catalysed reaction is sn-glycerol 1-phosphate + (2E,6E,10E)-geranylgeranyl diphosphate = sn-3-O-(geranylgeranyl)glycerol 1-phosphate + diphosphate. Prenyltransferase that catalyzes the transfer of the geranylgeranyl moiety of geranylgeranyl diphosphate (GGPP) to the C3 hydroxyl of sn-glycerol-1-phosphate (G1P). The chain is Geranylgeranylglyceryl phosphate synthase from Spirosoma linguale (strain ATCC 33905 / DSM 74 / LMG 10896 / Claus 1).